The chain runs to 1152 residues: ATP-dependent helicase/deoxyribonuclease subunit B (1152 aa).

The region spanning 1-338 (MSIRFIYGRA…LVRDRNYRFR (338 aa)) is the UvrD-like helicase ATP-binding domain. 8-15 (GRAGSGKS) serves as a coordination point for ATP. A UvrD-like helicase C-terminal domain is found at 276 to 579 (PYRFKNSEEL…NVGDIARIKG (304 aa)). Cysteine 785, cysteine 1106, cysteine 1109, and cysteine 1115 together coordinate [4Fe-4S] cluster.

This sequence belongs to the helicase family. AddB/RexB type 1 subfamily. In terms of assembly, heterodimer of AddA and AddB. The cofactor is Mg(2+). [4Fe-4S] cluster is required as a cofactor.

Functionally, the heterodimer acts as both an ATP-dependent DNA helicase and an ATP-dependent, dual-direction single-stranded exonuclease. Recognizes the chi site generating a DNA molecule suitable for the initiation of homologous recombination. The AddB subunit has 5' -&gt; 3' nuclease activity but not helicase activity. The protein is ATP-dependent helicase/deoxyribonuclease subunit B of Clostridium botulinum (strain Alaska E43 / Type E3).